We begin with the raw amino-acid sequence, 248 residues long: MIVLVTGATAGFGECITRRFIQQGHKVIATGRRQERLQELKDELGDNLYIAQLDVRNRAAIEEMLASLPAEWCNIDILVNNAGLALGMEPAHKASVEDWETMIDTNNKGLVYMTRAVLPGMVERNHGHIINIGSTAGSWPYAGGNVYGATKAFVRQFSLNLRTDLHGTAVRVTDIEPGLVGGTEFSNVRFKGDDGKAEKTYQNTVALTPEDVSEAVWWVSTLPAHVNINTLEMMPVTQSYAGLNVHRQ.

NADP(+)-binding positions include 7–12, 32–33, 54–55, and N81; these read GATAGF, RR, and DV. S134 contacts substrate. Residues Y147, K151, and 177-185 each bind NADP(+); that span reads PGLVGGTEF. The Proton acceptor role is filled by Y147.

Belongs to the short-chain dehydrogenases/reductases (SDR) family. As to quaternary structure, homotetramer.

The enzyme catalyses 3-hydroxypropanoate + NADP(+) = 3-oxopropanoate + NADPH + H(+). It catalyses the reaction L-allo-threonine + NADP(+) = aminoacetone + CO2 + NADPH. Its function is as follows. NADP-dependent dehydrogenase with broad substrate specificity acting on 3-hydroxy acids. Catalyzes the NADP-dependent oxidation of L-allo-threonine to L-2-amino-3-keto-butyrate, which is spontaneously decarboxylated into aminoacetone. Also acts on D-threonine, L-serine, D-serine, D-3-hydroxyisobutyrate, L-3-hydroxyisobutyrate, D-glycerate and L-glycerate. Able to catalyze the reduction of the malonic semialdehyde to 3-hydroxypropionic acid. YdfG is apparently supplementing RutE, the presumed malonic semialdehyde reductase involved in pyrimidine degradation since both are able to detoxify malonic semialdehyde. This chain is NADP-dependent 3-hydroxy acid dehydrogenase YdfG, found in Escherichia coli (strain K12).